A 482-amino-acid polypeptide reads, in one-letter code: Methylenetetrahydrofolate--tRNA-(uracil-5-)-methyltransferase TrmFO (482 aa).

11-16 contacts FAD; sequence GAGLAG.

Belongs to the MnmG family. TrmFO subfamily. FAD serves as cofactor.

The protein resides in the cytoplasm. The enzyme catalyses uridine(54) in tRNA + (6R)-5,10-methylene-5,6,7,8-tetrahydrofolate + NADH + H(+) = 5-methyluridine(54) in tRNA + (6S)-5,6,7,8-tetrahydrofolate + NAD(+). It catalyses the reaction uridine(54) in tRNA + (6R)-5,10-methylene-5,6,7,8-tetrahydrofolate + NADPH + H(+) = 5-methyluridine(54) in tRNA + (6S)-5,6,7,8-tetrahydrofolate + NADP(+). Catalyzes the folate-dependent formation of 5-methyl-uridine at position 54 (M-5-U54) in all tRNAs. This is Methylenetetrahydrofolate--tRNA-(uracil-5-)-methyltransferase TrmFO from Nitratidesulfovibrio vulgaris (strain DP4) (Desulfovibrio vulgaris).